The sequence spans 260 residues: Large ribosomal subunit protein uL2 (260 aa).

The interval 1–24 is disordered; sequence MGRVIRAQRKGAGSVFKSHTHHRK.

This sequence belongs to the universal ribosomal protein uL2 family.

The protein resides in the cytoplasm. The protein is Large ribosomal subunit protein uL2 (RPL8) of Solanum lycopersicum (Tomato).